A 470-amino-acid chain; its full sequence is Histidine--tRNA ligase (470 aa).

The protein belongs to the class-II aminoacyl-tRNA synthetase family. In terms of assembly, homodimer.

Its subcellular location is the cytoplasm. The catalysed reaction is tRNA(His) + L-histidine + ATP = L-histidyl-tRNA(His) + AMP + diphosphate + H(+). The polypeptide is Histidine--tRNA ligase (Xanthomonas oryzae pv. oryzae (strain PXO99A)).